A 424-amino-acid chain; its full sequence is Gamma-glutamyl phosphate reductase (424 aa).

It belongs to the gamma-glutamyl phosphate reductase family.

It localises to the cytoplasm. The enzyme catalyses L-glutamate 5-semialdehyde + phosphate + NADP(+) = L-glutamyl 5-phosphate + NADPH + H(+). It participates in amino-acid biosynthesis; L-proline biosynthesis; L-glutamate 5-semialdehyde from L-glutamate: step 2/2. Functionally, catalyzes the NADPH-dependent reduction of L-glutamate 5-phosphate into L-glutamate 5-semialdehyde and phosphate. The product spontaneously undergoes cyclization to form 1-pyrroline-5-carboxylate. This is Gamma-glutamyl phosphate reductase from Shewanella woodyi (strain ATCC 51908 / MS32).